The following is a 281-amino-acid chain: CCAAT/enhancer-binding protein epsilon (281 aa).

The disordered stretch occupies residues 1–30 (MSHGTYYECEPRGGQQPLEFSGGRAGPGEL). Lys121 is covalently cross-linked (Glycyl lysine isopeptide (Lys-Gly) (interchain with G-Cter in SUMO2)). At Ser181 the chain carries Phosphoserine. A bZIP domain is found at 204–267 (SLEYRLRRER…DTLRNLFRQI (64 aa)). Positions 208–245 (RLRRERNNIAVRKSRDKAKRRIMETQQKVLEYMAENER) are basic motif. The segment at 246-267 (LRNRVDQLTQELDTLRNLFRQI) is leucine-zipper.

This sequence belongs to the bZIP family. C/EBP subfamily. As to quaternary structure, binds DNA as a homodimer and as a heterodimer. Can form stable heterodimers with CEBPA, CEBPB and CEBPD. Interacts with GATA1 and SPI1. Interacts with SMARCD2. In terms of processing, phosphorylated.

It is found in the nucleus. In terms of biological role, transcriptional activator. C/EBP are DNA-binding proteins that recognize two different motifs: the CCAAT homology common to many promoters and the enhanced core homology common to many enhancers. Required for the promyelocyte-myelocyte transition in myeloid differentiation. The protein is CCAAT/enhancer-binding protein epsilon (Cebpe) of Mus musculus (Mouse).